Reading from the N-terminus, the 386-residue chain is O-methyltransferase 12 (386 aa).

S-adenosyl-L-homocysteine contacts are provided by S207, G231, D254, D274, and K288. D254 contacts S-adenosyl-L-methionine. H292 functions as the Proton acceptor in the catalytic mechanism.

Belongs to the class I-like SAM-binding methyltransferase superfamily. Cation-independent O-methyltransferase family. As to quaternary structure, homodimer. As to expression, expressed at high levels in all tissues.

It catalyses the reaction 4-hydroxy-3,5-dimethoxyphenethylamine + S-adenosyl-L-methionine = mescaline + S-adenosyl-L-homocysteine + H(+). The enzyme catalyses dopamine + S-adenosyl-L-methionine = 4-methoxytyramine + S-adenosyl-L-homocysteine + H(+). It functions in the pathway aromatic compound metabolism. Its pathway is alkaloid biosynthesis. Functionally, O-methyltransferase participating in the biosynthesis of natural products derived from phenylethylamine, including mescaline, a natural hallucinogen potentially used in psychotherapeutic treatments. Catalyzes the O-methylation of dopamine, 4-hydroxy-3,5-dimethoxyphenethylamine, 4,5-dihydroxy-3-methoxyphenethylamine and N-methyl-4,5-dihydroxy-3-methoxyphenethylamine. Also involved in the conversion of N-methyl-4-hydroxy-3,5-dimethoxyphenethylamine to N-methylmescaline. The protein is O-methyltransferase 12 of Lophophora williamsii (Peyote).